The sequence spans 48 residues: Toxin CSTX-15 (48 aa).

Intrachain disulfides connect Cys3–Cys18, Cys10–Cys27, Cys17–Cys42, and Cys29–Cys40.

Belongs to the neurotoxin 19 (CSTX) family. 12 subfamily. As to quaternary structure, heterodimer of A and B chains; disulfide-linked. Contains 4 disulfide bonds. Expressed by the venom gland.

The protein resides in the secreted. The polypeptide is Toxin CSTX-15 (Cupiennius salei (American wandering spider)).